A 535-amino-acid polypeptide reads, in one-letter code: Large neutral amino acids transporter small subunit 2 (535 aa).

The segment covering 1 to 10 (MEKGARHRHN) has biased composition (basic residues). The tract at residues 1–30 (MEKGARHRHNTDKNHAGGSESEDFPEASSG) is disordered. The Cytoplasmic portion of the chain corresponds to 1–44 (MEKGARHRHNTDKNHAGGSESEDFPEASSGGGGVALKKEIGLVS). Phosphoserine occurs at positions 19, 28, and 29. A helical transmembrane segment spans residues 45-65 (ACGIIVGNIIGSGIFVSPKGV). I53 provides a ligand contact to L-leucine. The Extracellular portion of the chain corresponds to 66-73 (LENAGSVG). A helical transmembrane segment spans residues 74-95 (LAVIVWIVTGLITAVGALCYAE). The Cytoplasmic portion of the chain corresponds to 96-116 (LGVTIPKSGGDYSYVKDIFGG). A helical membrane pass occupies residues 117–149 (LAGFLRLWIAVLVIYPTNQAVIALTFSNYVLQP). N134 is a binding site for L-tryptophan. Residues 150–157 (LFPTCFPP) lie on the Extracellular side of the membrane. The helical transmembrane segment at 158–178 (DSGLRLLAAICLLLLTWVNCS) threads the bilayer. The Cytoplasmic portion of the chain corresponds to 179–181 (SVR). The chain crosses the membrane as a helical span at residues 182 to 210 (WATRVQDIFTAGKLLALALIIIMGVVQIC). Topologically, residues 211 to 230 (KGEYFWLEPKNAFDNFQEPD) are extracellular. A helical membrane pass occupies residues 231–252 (IGLIALAFLQGSFAYGGWNFLN). G246 is an L-leucine binding site. The Cytoplasmic portion of the chain corresponds to 253-265 (YVTEELVDPYKNL). Residues 266 to 287 (PRAIFISIPLVTFVYVFANVAY) traverse the membrane as a helical segment. Over 288-312 (ITAMSPQELLASNAVAVTFGEKLLG) the chain is Extracellular. Residues 313 to 338 (VMAWIMPISVALSTFGGVNGSLFTSS) traverse the membrane as a helical segment. The Cytoplasmic portion of the chain corresponds to 339–364 (RLFFAGAREGHLPSVLAMIHVKRCTP). A helical transmembrane segment spans residues 365-382 (IPALLFTCLSTLLMLVTS). Over 383 to 386 (DMYT) the chain is Extracellular. Residues 387–408 (LINYVGFINYLFYGVTVAGQIV) traverse the membrane as a helical segment. N395 is an L-tryptophan binding site. Residues 409–423 (LRWKKPDIPRPIKIN) are Cytoplasmic-facing. 2 helical membrane passes run 424–446 (LLFP…WSEP) and 447–466 (VVCG…YFLG). At 467–535 (VYWQHKPKCF…DKDSLEQSQP (69 aa)) the chain is on the cytoplasmic side. The disordered stretch occupies residues 500–535 (GGSGTEGTREDMEEQQQPICQPSPGKDKDSLEQSQP). A compositionally biased stretch (basic and acidic residues) spans 524–535 (GKDKDSLEQSQP). Phosphoserine is present on S529.

The protein belongs to the amino acid-polyamine-organocation (APC) superfamily. L-type amino acid transporter (LAT) (TC 2.A.3.8) family. As to quaternary structure, disulfide-linked heterodimer composed of the catalytic light chain subunit SLC7A8 and the heavy chain subunit SLC3A2. SLC3A2 acts as a chaperone for correct plasma membrane trafficking and stabilization of SLC7A8 and modulates the substrate affinity and specificity of SLC7A8. ICAM-1 associates with the heterodimer SLC3A2/SLC7A8; facilitates leucine uptake. As to expression, mainly expressed in kidney and small intestine.

It localises to the cell membrane. Its subcellular location is the basolateral cell membrane. It catalyses the reaction L-histidine(in) + L-phenylalanine(out) = L-histidine(out) + L-phenylalanine(in). The enzyme catalyses L-tryptophan(in) + L-phenylalanine(out) = L-tryptophan(out) + L-phenylalanine(in). The catalysed reaction is L-isoleucine(in) + L-phenylalanine(out) = L-isoleucine(out) + L-phenylalanine(in). It carries out the reaction L-valine(in) + L-phenylalanine(out) = L-valine(out) + L-phenylalanine(in). It catalyses the reaction L-leucine(in) + L-phenylalanine(out) = L-leucine(out) + L-phenylalanine(in). The enzyme catalyses L-glutamine(in) + L-phenylalanine(out) = L-glutamine(out) + L-phenylalanine(in). The catalysed reaction is L-cysteine(in) + L-phenylalanine(out) = L-cysteine(out) + L-phenylalanine(in). It carries out the reaction L-phenylalanine(out) + L-methionine(in) = L-phenylalanine(in) + L-methionine(out). It catalyses the reaction L-leucine(out) + L-methionine(in) = L-leucine(in) + L-methionine(out). The enzyme catalyses L-cysteine(out) + L-methionine(in) = L-cysteine(in) + L-methionine(out). The catalysed reaction is S-methylmercury-L-cysteine(out) + L-methionine(in) = S-methylmercury-L-cysteine(in) + L-methionine(out). It carries out the reaction S-methylmercury-L-cysteine(in) + L-leucine(out) = S-methylmercury-L-cysteine(out) + L-leucine(in). It catalyses the reaction S-methylmercury-L-cysteine(in) + L-phenylalanine(out) = S-methylmercury-L-cysteine(out) + L-phenylalanine(in). The enzyme catalyses L-phenylalanine(out) + L-serine(in) = L-phenylalanine(in) + L-serine(out). The catalysed reaction is L-phenylalanine(out) + glycine(in) = L-phenylalanine(in) + glycine(out). It carries out the reaction L-phenylalanine(out) + L-alanine(in) = L-phenylalanine(in) + L-alanine(out). It catalyses the reaction 3,3',5-triiodo-L-thyronine(out) = 3,3',5-triiodo-L-thyronine(in). The enzyme catalyses 3,3'-diiodo-L-thyronine(out) = 3,3'-diiodo-L-thyronine(in). The catalysed reaction is L-dopa(out) + L-phenylalanine(in) = L-dopa(in) + L-phenylalanine(out). Its activity is regulated as follows. The transporter activity is inhibited by 2-aminobicyclo-(2,2,1)heptane-2-carboxylic acid (BCH) (a specific inhibitor of system L transport). In terms of biological role, associates with SLC3A2 to form a functional heterodimeric complex that translocates small and large neutral amino acids with broad specificity and a stoichiometry of 1:1. Functions as amino acid antiporter mediating the influx of extracellular essential amino acids mainly in exchange with the efflux of highly concentrated intracellular amino acids. Has relatively symmetrical selectivities but strongly asymmetrical substrate affinities at both the intracellular and extracellular sides of the transporter. This asymmetry allows SLC7A8 to regulate intracellular amino acid pools (mM concentrations) by exchange with external amino acids (uM concentration range), equilibrating the relative concentrations of different amino acids across the plasma membrane instead of mediating their net uptake. May play an essential role in the reabsorption of neutral amino acids from the epithelial cells to the bloodstream in the kidney. Involved in the uptake of methylmercury (MeHg) when administered as the L-cysteine or D,L-homocysteine complexes, and hence plays a role in metal ion homeostasis and toxicity. Involved in the cellular activity of small molecular weight nitrosothiols, via the stereoselective transport of L-nitrosocysteine (L-CNSO) across the transmembrane. Imports the thyroid hormone diiodothyronine (T2) and to a smaller extent triiodothyronine (T3) but not rT 3 or thyroxine (T4). Mediates the uptake of L-DOPA. May participate in auditory function. This Oryctolagus cuniculus (Rabbit) protein is Large neutral amino acids transporter small subunit 2.